A 126-amino-acid polypeptide reads, in one-letter code: Fatty acid-binding protein, liver (126 aa).

N-acetylalanine is present on alanine 2. Residues arginine 56, glutamine 57, lysine 77, histidine 99, and glutamine 101 each contribute to the cholate site.

Belongs to the calycin superfamily. Fatty-acid binding protein (FABP) family.

The protein localises to the cytoplasm. Binds free fatty acids and their coenzyme A derivatives, bilirubin, and some other small molecules in the cytoplasm. May be involved in intracellular lipid transport. Binds 2 molecules of cholate per subunit. The protein is Fatty acid-binding protein, liver (FABP1) of Gallus gallus (Chicken).